The primary structure comprises 316 residues: Transaldolase (316 aa).

K127 acts as the Schiff-base intermediate with substrate in catalysis.

It belongs to the transaldolase family. Type 2 subfamily.

It localises to the cytoplasm. The enzyme catalyses D-sedoheptulose 7-phosphate + D-glyceraldehyde 3-phosphate = D-erythrose 4-phosphate + beta-D-fructose 6-phosphate. Its pathway is carbohydrate degradation; pentose phosphate pathway; D-glyceraldehyde 3-phosphate and beta-D-fructose 6-phosphate from D-ribose 5-phosphate and D-xylulose 5-phosphate (non-oxidative stage): step 2/3. In terms of biological role, transaldolase is important for the balance of metabolites in the pentose-phosphate pathway. The polypeptide is Transaldolase (Helicobacter pylori (strain Shi470)).